The following is a 148-amino-acid chain: Small ribosomal subunit protein eS6 (148 aa).

The protein belongs to the eukaryotic ribosomal protein eS6 family.

This chain is Small ribosomal subunit protein eS6, found in Pyrobaculum islandicum (strain DSM 4184 / JCM 9189 / GEO3).